A 507-amino-acid polypeptide reads, in one-letter code: Maturase K (507 aa).

This sequence belongs to the intron maturase 2 family. MatK subfamily.

It localises to the plastid. It is found in the chloroplast. Usually encoded in the trnK tRNA gene intron. Probably assists in splicing its own and other chloroplast group II introns. The chain is Maturase K from Liriodendron chinense (Chinese tulip tree).